The following is a 188-amino-acid chain: UPF0301 protein CPn_0139/CP_0633/CPj0139/CpB0140 (188 aa).

This sequence belongs to the UPF0301 (AlgH) family.

The polypeptide is UPF0301 protein CPn_0139/CP_0633/CPj0139/CpB0140 (Chlamydia pneumoniae (Chlamydophila pneumoniae)).